A 313-amino-acid chain; its full sequence is Probable cytochrome c oxidase subunit 2 (313 aa).

The region spanning 5 to 51 (RYWSKQSYKKLKVDQEHNTTEYTNVCNSTSLGSTYTLPLKMELWKIY) is the RPE1 insert domain. A run of 3 helical transmembrane segments spans residues 39-59 (YTLP…YFLI), 94-114 (LLYI…FVCI), and 131-151 (LLIE…IAVP). Residues His-233, Cys-268, Cys-272, and His-276 each coordinate Cu cation.

It belongs to the cytochrome c oxidase subunit 2 family. Cu cation serves as cofactor. The cofactor is heme.

Its subcellular location is the cell membrane. It catalyses the reaction 4 Fe(II)-[cytochrome c] + O2 + 8 H(+)(in) = 4 Fe(III)-[cytochrome c] + 2 H2O + 4 H(+)(out). Functionally, subunits I and II form the functional core of the enzyme complex. Electrons originating in cytochrome c are transferred via heme a and Cu(A) to the binuclear center formed by heme a3 and Cu(B). In Rickettsia prowazekii (strain Madrid E), this protein is Probable cytochrome c oxidase subunit 2 (ctaC).